A 168-amino-acid polypeptide reads, in one-letter code: MFVLPDESRQLFKDPFGTLHRDIGTVLPELAGRTIYSVGDVVTHSLQQNGITPAIAVVDGQTMRSPCIKMPEIAGPCIHVKNPPGTITDELVSALTHAVDHTPVTILVDGEEDLAVIPLVIAAPLSSIVIYGQPNEGVVLRIVDDQAKTAARRLLTQFTKTESPIPHN.

The GTP site is built by Asp40, Val41, Val42, Asp59, and Glu112.

It belongs to the GTP-dependent DPCK family.

The catalysed reaction is 3'-dephospho-CoA + GTP = GDP + CoA + H(+). It participates in cofactor biosynthesis; coenzyme A biosynthesis. Its function is as follows. Catalyzes the GTP-dependent phosphorylation of the 3'-hydroxyl group of dephosphocoenzyme A to form coenzyme A (CoA). This chain is GTP-dependent dephospho-CoA kinase, found in Methanoregula boonei (strain DSM 21154 / JCM 14090 / 6A8).